The primary structure comprises 368 residues: Cytochrome P450 119 (368 aa).

The heme site is built by histidine 76, arginine 80, threonine 257, arginine 259, histidine 315, and cysteine 317.

The protein belongs to the cytochrome P450 family. Heme serves as cofactor.

The protein resides in the cytoplasm. It catalyses the reaction 2 a phenolic donor + H2O2 = 2 a phenolic radical donor + 2 H2O. Functionally, the endogenous substrate is not known. In vitro, catalyzes the H(2)O(2)-dependent epoxidation of styrene, cis-beta-methylstyrene, and cis-stilbene with retention of stereochemistry. Is able to use cumene hydroperoxide (CHP) or tert-butyl hydroperoxide (TBHP) instead of H(2)O(2) as the electron acceptor. Can also hydroxylate fatty acids such as lauric acid. This is Cytochrome P450 119 (cyp119) from Sulfolobus acidocaldarius (strain ATCC 33909 / DSM 639 / JCM 8929 / NBRC 15157 / NCIMB 11770).